The primary structure comprises 173 residues: Trafficking regulator of GLUT4 1 (173 aa).

Residues 1-17 (MANPVQPQLQDPGSTSP) show a composition bias toward polar residues. A disordered region spans residues 1–22 (MANPVQPQLQDPGSTSPLDLPE). The Cytoplasmic segment spans residues 1 to 102 (MANPVQPQLQ…QDQEAPKDYL (102 aa)). Residues serine 16, serine 43, serine 45, serine 70, serine 84, and serine 85 each carry the phosphoserine modification. An intramembrane region (helical) is located at residues 103–123 (VLAIASCFCPVWPLNLIPLIF). Residues 124-150 (SIMSRSSVQQGDLDGARRLGRLARLLS) are Cytoplasmic-facing. A helical transmembrane segment spans residues 151–171 (ITFIILGIVIIIVAVTVNFTV). The Extracellular portion of the chain corresponds to 172-173 (PK).

This sequence belongs to the CD225/Dispanin family. Interacts with SLC2A4; the interaction is required for proper SLC2A4 reacycling after insulin stimulation. In terms of tissue distribution, present in adipose tissue and undetectable in other tissues (at protein level).

It localises to the cell membrane. Its subcellular location is the endomembrane system. It is found in the cytoplasm. The protein localises to the perinuclear region. In terms of biological role, regulates insulin-mediated adipose tissue glucose uptake and transport by modulation of SLC2A4 recycling. Not required for SLC2A4 membrane fusion upon an initial stimulus, but rather is necessary for proper protein recycling during prolonged insulin stimulation. The chain is Trafficking regulator of GLUT4 1 from Rattus norvegicus (Rat).